Here is a 100-residue protein sequence, read N- to C-terminus: Serine protease inhibitor 1 protein (100 aa).

An N-terminal signal peptide occupies residues 1–20 (MKHLLIVSLVFVTIIWKIEC). Cystine bridges form between Cys-42-Cys-74, Cys-51-Cys-69, Cys-54-Cys-65, Cys-58-Cys-93, and Cys-76-Cys-90. The TIL domain occupies 42–93 (CGLNEVWMVCSSCEEECGKTPQPCPRICQPARCQCPAHKGYRRDGQGNCIFC).

Its subcellular location is the secreted. This is Serine protease inhibitor 1 protein from Caenorhabditis elegans.